A 621-amino-acid polypeptide reads, in one-letter code: E3 SUMO-protein ligase PIAS2 (621 aa).

One can recognise an SAP domain in the interval 11-45 (VSSFRVSELQVLLGFAGRNKSGRKHDLLMRALHLL). The short motif at 19–23 (LQVLL) is the LXXLL motif element. Glycyl lysine isopeptide (Lys-Gly) (interchain with G-Cter in SUMO2) cross-links involve residues Lys46 and Lys249. One can recognise a PINIT domain in the interval 134-299 (QPSPPIPPVH…SMSVYLVRQL (166 aa)). An SP-RING-type zinc finger spans residues 331–412 (PDSEIATTSL…FMEILNDCSD (82 aa)). The Zn(2+) site is built by Cys362, His364, Cys385, and Cys388. Residues Lys430, Lys435, Lys443, and Lys452 each participate in a glycyl lysine isopeptide (Lys-Gly) (interchain with G-Cter in SUMO2) cross-link. An SUMO1-binding region spans residues 467-473 (VDVIDLT). Residues Ser476, Ser477, and Ser478 each carry the phosphoserine modification. A Nuclear localization signal motif is present at residues 484–492 (PPAKRKCIF). A Glycyl lysine isopeptide (Lys-Gly) (interchain with G-Cter in SUMO2) cross-link involves residue Lys489. Ser499 carries the phosphoserine modification. Residues Lys502 and Gln562 each participate in a glycyl lysine isopeptide (Lys-Gly) (interchain with G-Cter in SUMO2) cross-link. Positions 579-610 (SSTSVTTTSSHESSTHVSSSSSRSETGVITSS) are enriched in low complexity. Residues 579 to 621 (SSTSVTTTSSHESSTHVSSSSSRSETGVITSSGSNIPDIISLD) are disordered.

This sequence belongs to the PIAS family. As to quaternary structure, binds SUMO1 and UBE2I. Interacts with AXIN1, JUN, MDM2, PARK7, TP53 and TP73 isoform alpha, but not TP73 isoform beta. Interacts with STAT4 following IL12 and IFN-alpha stimulation of T-cells. Interacts also with GTF2I, GTF2IRD1, IKFZ1, DAB2 and MSX2, as well as with several steroid receptors, including ESR1, ESR2, NR3C1, PGR, AR, and with NCOA2. Sumoylation of a target protein seems to enhance the interaction. Binds to sumoylated ELK1. Binds DNA, such as CDKN1A promoter, in a sequence-specific manner. Interacts with PLAG1. Interacts with KLF8; the interaction results in SUMO ligation and repression of KLF8 transcriptional activity and of its cell cycle progression into G(1) phase. PIAS2-beta interacts with IFIH1/MDA5. Isoform PIAS2-alpha interacts with PML (isoform PML-12). Interacts with PRDM1/Blimp-1. In terms of processing, sumoylated. As to expression, mainly expressed in testis. Isoform 3 is expressed predominantly in adult testis, weakly in pancreas, embryonic testis and sperm, and at very low levels in other organs.

The protein localises to the nucleus speckle. It localises to the nucleus. Its subcellular location is the PML body. It participates in protein modification; protein sumoylation. Functionally, functions as an E3-type small ubiquitin-like modifier (SUMO) ligase, stabilizing the interaction between UBE2I and the substrate, and as a SUMO-tethering factor. Plays a crucial role as a transcriptional coregulator in various cellular pathways, including the STAT pathway, the p53 pathway and the steroid hormone signaling pathway. The effects of this transcriptional coregulation, transactivation or silencing may vary depending upon the biological context and the PIAS2 isoform studied. However, it seems to be mostly involved in gene silencing. Binds to sumoylated ELK1 and enhances its transcriptional activity by preventing recruitment of HDAC2 by ELK1, thus reversing SUMO-mediated repression of ELK1 transactivation activity. Isoform PIAS2-beta, but not isoform PIAS2-alpha, promotes MDM2 sumoylation. Isoform PIAS2-alpha promotes PARK7 sumoylation. Isoform PIAS2-beta promotes NCOA2 sumoylation more efficiently than isoform PIAS2-alpha. Isoform PIAS2-alpha sumoylates PML at'Lys-65' and 'Lys-160'. The chain is E3 SUMO-protein ligase PIAS2 (PIAS2) from Homo sapiens (Human).